The chain runs to 729 residues: Monosaccharide-sensing protein 3 (729 aa).

A run of 6 helical transmembrane segments spans residues 5 to 25 (VLVALAAAIGNMLQGWDNATI), 46 to 66 (GLIVAMSLIGATLITTFSGPV), 81 to 101 (VLYFLSSIVMFWSPNVYVLLF), 104 to 124 (LLDGFGIGLAVTLVPIYISET), 135 to 155 (TFPQFCGSGGMFLSYCLVFGM), and 165 to 185 (LMLGVLSIPSIAYFVLAAFFL). The segment at 337–372 (QESQWDPERNNEDSSDQDENLNSPLLSPQTTEPDDY) is disordered. The segment covering 356–367 (NLNSPLLSPQTT) has biased composition (polar residues). A Phosphoserine modification is found at Ser446. The next 6 helical transmembrane spans lie at 511–531 (ALMVGVGLQILQQFAGINGVM), 557–577 (ASLLISALTTLLMLPCILVSM), 581–601 (MLSTIPILILSLVTLVIGSLV), 610–630 (LISTASVTVYLSCFVMGFGAI), 650–670 (ICALTFWICDIIVTYTLPVML), and 673–693 (IGIAGVFGIYAIVCAVAWVFV).

Belongs to the major facilitator superfamily. Sugar transporter (TC 2.A.1.1) family. As to expression, weakly expressed.

Its subcellular location is the vacuole membrane. The catalysed reaction is D-glucose(out) + H(+)(in) = D-glucose(in) + H(+)(out). It catalyses the reaction sucrose(out) + H(+)(in) = sucrose(in) + H(+)(out). In terms of biological role, sugar proton-coupled antiporter which contributes to vacuolar sugar import (e.g. monosaccharides including glucose,sucrose and fructose), particularly during stress responses (e.g. in response to cold). The sequence is that of Monosaccharide-sensing protein 3 from Arabidopsis thaliana (Mouse-ear cress).